A 355-amino-acid chain; its full sequence is UDP-N-acetylglucosamine--N-acetylmuramyl-(pentapeptide) pyrophosphoryl-undecaprenol N-acetylglucosamine transferase (355 aa).

Residues 14–16 (SGG), N126, R162, S190, I243, 262–267 (ALTVSE), and Q288 contribute to the UDP-N-acetyl-alpha-D-glucosamine site.

This sequence belongs to the glycosyltransferase 28 family. MurG subfamily.

It localises to the cell inner membrane. The enzyme catalyses di-trans,octa-cis-undecaprenyl diphospho-N-acetyl-alpha-D-muramoyl-L-alanyl-D-glutamyl-meso-2,6-diaminopimeloyl-D-alanyl-D-alanine + UDP-N-acetyl-alpha-D-glucosamine = di-trans,octa-cis-undecaprenyl diphospho-[N-acetyl-alpha-D-glucosaminyl-(1-&gt;4)]-N-acetyl-alpha-D-muramoyl-L-alanyl-D-glutamyl-meso-2,6-diaminopimeloyl-D-alanyl-D-alanine + UDP + H(+). The protein operates within cell wall biogenesis; peptidoglycan biosynthesis. Its function is as follows. Cell wall formation. Catalyzes the transfer of a GlcNAc subunit on undecaprenyl-pyrophosphoryl-MurNAc-pentapeptide (lipid intermediate I) to form undecaprenyl-pyrophosphoryl-MurNAc-(pentapeptide)GlcNAc (lipid intermediate II). This Blochmanniella pennsylvanica (strain BPEN) protein is UDP-N-acetylglucosamine--N-acetylmuramyl-(pentapeptide) pyrophosphoryl-undecaprenol N-acetylglucosamine transferase.